We begin with the raw amino-acid sequence, 750 residues long: Photosystem I P700 chlorophyll a apoprotein A1 (750 aa).

8 helical membrane passes run 70–93 (VFSAHFGQLSIIFLWLSGMYFHGA), 156–179 (LYCTAIGALVFAALMLFAGWFHYH), 195–219 (LNHHLAGLLGLGSLSWAGHQVHVSL), 291–309 (IAHHHLAIAILFLIAGHMY), 346–369 (WHAQLSLNLAMLGSLTIVVAHHMY), 385–411 (LSLFTHHMWIGGFLIVGAAAHAAIFMV), 433–455 (AIISHLNWVCIFLGFHSFGLYIH), and 531–549 (FLVHHIHAFTIHVTVLILL). Cysteine 573 and cysteine 582 together coordinate [4Fe-4S] cluster. The next 2 membrane-spanning stretches (helical) occupy residues 589–610 (HVFLGLFWMYNAISVVIFHFSW) and 664–686 (LSAYGLFFLGAHFVWAFSLMFLF). Position 675 (histidine 675) interacts with chlorophyll a'. Chlorophyll a contacts are provided by methionine 683 and tyrosine 691. Tryptophan 692 is a phylloquinone binding site. A helical membrane pass occupies residues 724-744 (AVGVTHYLLGGIATTWAFFLA).

It belongs to the PsaA/PsaB family. In terms of assembly, the PsaA/B heterodimer binds the P700 chlorophyll special pair and subsequent electron acceptors. PSI consists of a core antenna complex that captures photons, and an electron transfer chain that converts photonic excitation into a charge separation. The eukaryotic PSI reaction center is composed of at least 11 subunits. It depends on P700 is a chlorophyll a/chlorophyll a' dimer, A0 is one or more chlorophyll a, A1 is one or both phylloquinones and FX is a shared 4Fe-4S iron-sulfur center. as a cofactor.

Its subcellular location is the plastid. The protein resides in the chloroplast thylakoid membrane. It carries out the reaction reduced [plastocyanin] + hnu + oxidized [2Fe-2S]-[ferredoxin] = oxidized [plastocyanin] + reduced [2Fe-2S]-[ferredoxin]. Functionally, psaA and PsaB bind P700, the primary electron donor of photosystem I (PSI), as well as the electron acceptors A0, A1 and FX. PSI is a plastocyanin-ferredoxin oxidoreductase, converting photonic excitation into a charge separation, which transfers an electron from the donor P700 chlorophyll pair to the spectroscopically characterized acceptors A0, A1, FX, FA and FB in turn. Oxidized P700 is reduced on the lumenal side of the thylakoid membrane by plastocyanin. The protein is Photosystem I P700 chlorophyll a apoprotein A1 of Aethionema cordifolium (Lebanon stonecress).